A 131-amino-acid chain; its full sequence is Profilin-1 (131 aa).

C13 and C115 are disulfide-bonded. An Involved in PIP2 interaction motif is present at residues 81–97 (AVIRGKKGSGGITVKKT). The residue at position 111 (T111) is a Phosphothreonine.

It belongs to the profilin family. In terms of assembly, multimer. Occurs in many kinds of cells as a complex with monomeric actin in a 1:1 ratio. In terms of processing, phosphorylated by MAP kinases. As to expression, pollen specific.

The protein resides in the cytoplasm. It is found in the cytoskeleton. Its function is as follows. Binds to actin and affects the structure of the cytoskeleton. At high concentrations, profilin prevents the polymerization of actin, whereas it enhances it at low concentrations. By binding to PIP2, it inhibits the formation of IP3 and DG. This is Profilin-1 (PRO1) from Zea mays (Maize).